Consider the following 363-residue polypeptide: Type 3 secretion system translocon protein SctB (363 aa).

A helical membrane pass occupies residues 99 to 120; that stretch reads ISSLSSNAVSLIISVAVLLSAL.

It belongs to the SctB/SipC family. The core secretion machinery of the T3SS is composed of approximately 20 different proteins, including cytoplasmic components, a base, an export apparatus and a needle. This subunit is involved in the formation of a pore, called the translocon, in host membrane.

The protein localises to the secreted. It localises to the host membrane. In terms of biological role, component of the type III secretion system (T3SS), also called injectisome, which is used to inject bacterial effector proteins into eukaryotic host cells. IpaB/SctE and IpaC/SctB are inserted into the host membrane where they form a pore and allow the translocation of effector proteins into the cytosol of target cells. This is Type 3 secretion system translocon protein SctB from Shigella dysenteriae.